Reading from the N-terminus, the 177-residue chain is Flavodoxin (177 aa).

A Flavodoxin-like domain is found at 4 to 173; the sequence is IGIFFGSDTG…RIDTWLDKLK (170 aa).

This sequence belongs to the flavodoxin family. FMN is required as a cofactor.

Low-potential electron donor to a number of redox enzymes. NifF is the electron donor to nitrogenase. The protein is Flavodoxin (nifF) of Enterobacter agglomerans (Erwinia herbicola).